A 438-amino-acid polypeptide reads, in one-letter code: MPKIVVVGAVAGGATCASQIRRLDKESDIIIFEKDRDMSFANCALPYVIGEVVEDRKYALAYTPEKFYDRKQITVKTYHEVIAINDERQTVSVLNRKTNEQFEESYDKLILSPGASANSLGFESDITFTLRNLEDTDAIEQFIKANQVDKVLVVGAGYVSLEVLENLYKRGLHPTLIHRSDKINKLMDADMNQPILDELDKREIPYRLNEEIVAINGNEITFKSGRVEHYDMIIEGVGTHPNSKFIESSNIKLDRKGFIPVNDKLETNVPNIYAIGDIATSHYRHVDLPASVPLAWGAHRAASIVAEQIAGNDTIEFKGFLGNNIVKFFDYTFASVGVKPNELKQFDYKMVEVTQGAHANYYPGNSPLHLRVYYDTSNRQILRAAAVGKEGVDKRIDVLSMAMMNQLTVDELTEFEVAYAPPYSHPKDLINMIGYKAK.

An FAD-binding site is contributed by 8-33 (GAVAGGATCASQIRRLDKESDIIIFE). Substrate contacts are provided by Thr15, Gln19, Arg22, Ser39, and Asn42. The active-site Nucleophile is the Cys43. The active-site Redox-active is the Cys43. Lys71 is a substrate binding site. Residue 151 to 166 (VLVVGAGYVSLEVLEN) participates in NADP(+) binding. 267–277 (TNVPNIYAIGD) provides a ligand contact to FAD. His299 provides a ligand contact to substrate. Tyr419 provides a ligand contact to FAD. Lys427 is a binding site for substrate.

Belongs to the class-III pyridine nucleotide-disulfide oxidoreductase family. Homodimer. The cofactor is FAD.

It catalyses the reaction NADP(+) + 2 CoA = CoA-disulfide + NADPH + H(+). Catalyzes specifically the NADPH-dependent reduction of coenzyme A disulfide. The protein is Coenzyme A disulfide reductase of Staphylococcus aureus (strain bovine RF122 / ET3-1).